A 302-amino-acid polypeptide reads, in one-letter code: Glycine--tRNA ligase alpha subunit (302 aa).

It belongs to the class-II aminoacyl-tRNA synthetase family. As to quaternary structure, tetramer of two alpha and two beta subunits.

The protein localises to the cytoplasm. The catalysed reaction is tRNA(Gly) + glycine + ATP = glycyl-tRNA(Gly) + AMP + diphosphate. This Edwardsiella ictaluri (strain 93-146) protein is Glycine--tRNA ligase alpha subunit.